The following is a 192-amino-acid chain: Xanthine phosphoribosyltransferase (192 aa).

Residues leucine 20 and asparagine 27 each contribute to the xanthine site. 128-132 (ANGQA) is a 5-phospho-alpha-D-ribose 1-diphosphate binding site. Lysine 156 serves as a coordination point for xanthine.

The protein belongs to the purine/pyrimidine phosphoribosyltransferase family. Xpt subfamily. In terms of assembly, homodimer.

It localises to the cytoplasm. The catalysed reaction is XMP + diphosphate = xanthine + 5-phospho-alpha-D-ribose 1-diphosphate. It participates in purine metabolism; XMP biosynthesis via salvage pathway; XMP from xanthine: step 1/1. Its function is as follows. Converts the preformed base xanthine, a product of nucleic acid breakdown, to xanthosine 5'-monophosphate (XMP), so it can be reused for RNA or DNA synthesis. This chain is Xanthine phosphoribosyltransferase, found in Listeria monocytogenes serotype 4b (strain F2365).